The primary structure comprises 308 residues: MSGILEVYDAKRTDNLIITLEGISGSETIKAIKKRIAQKKLKLTEERQALRVEPKGKPLADDQKLSDLGLSSQKAVLYVRDLGPQIAWKTVFMAEYAGPLFVYPLFYLRPTFIYGQAAVNATMHPAVQIAFFAWSFHYAKRLFETQFIHRFGNSTMPQFNLVKNCSYYWGFAAFVAYFVNHPLFTPPAFGDLQVYFGLAGFVISEFGNLSIHILLRNLRPAGTRERRIPKPDGNPLSLLFNYVSCPNYTYEVASWIFFSIMVQSLPAIIFTTAGFAQMAIWAQGKHRNYLKEFPDYPKNRKAIVPFVL.

A Ubiquitin-like domain is found at 7-85; it reads VYDAKRTDNL…VLYVRDLGPQ (79 aa). 4 helical membrane passes run 112 to 132, 169 to 189, 194 to 214, and 255 to 275; these read FIYGQAAVNATMHPAVQIAFF, WGFAAFVAYFVNHPLFTPPAF, VYFGLAGFVISEFGNLSIHIL, and WIFFSIMVQSLPAIIFTTAGF.

Belongs to the steroid 5-alpha reductase family.

It localises to the endoplasmic reticulum membrane. It carries out the reaction a very-long-chain 2,3-saturated fatty acyl-CoA + NADP(+) = a very-long-chain (2E)-enoyl-CoA + NADPH + H(+). Its pathway is lipid metabolism; fatty acid biosynthesis. Catalyzes the last of the four reactions of the long-chain fatty acids elongation cycle. This endoplasmic reticulum-bound enzymatic process, allows the addition of 2 carbons to the chain of long- and very long-chain fatty acids/VLCFAs per cycle. This enzyme reduces the trans-2,3-enoyl-CoA fatty acid intermediate to an acyl-CoA that can be further elongated by entering a new cycle of elongation. Thereby, it participates in the production of VLCFAs of different chain lengths that are involved in multiple biological processes as precursors of membrane lipids and lipid mediators. This Caenorhabditis elegans protein is Probable very-long-chain enoyl-CoA reductase art-1 (art-1).